The primary structure comprises 207 residues: Probable GTP-binding protein EngB (207 aa).

Positions 24–199 (GGYEVAFAGR…RAIVGAWLGL (176 aa)) constitute an EngB-type G domain. GTP is bound by residues 32–39 (GRSNAGKS), 59–63 (GRTQQ), 77–80 (DLPG), 144–147 (TKAD), and 178–180 (YSG). 2 residues coordinate Mg(2+): serine 39 and threonine 61.

It belongs to the TRAFAC class TrmE-Era-EngA-EngB-Septin-like GTPase superfamily. EngB GTPase family. Mg(2+) serves as cofactor.

In terms of biological role, necessary for normal cell division and for the maintenance of normal septation. The protein is Probable GTP-binding protein EngB of Xanthomonas euvesicatoria pv. vesicatoria (strain 85-10) (Xanthomonas campestris pv. vesicatoria).